The sequence spans 392 residues: MANIDNKGQTELDQQDMEDVEDVEEEETGEDANSKARQLTAQMMQNPQVLAALQERLDDLVGTPTGYIESLPKVVKRRVNALKNLQVKCAQIEAKFYEEVHELERKYAALYQPLFDKRSDIINATYEPTEEECEWKVEEEDISGDLKEKAKLEEEKKDEEKEDPKGIPEFWLTVFKNVDLLSDMLQEHDEPILKHLKDIKVKFSDAGQPMSFTLEFYFEPNEFFTNEVLTKTYKMRSEPDESDPFSFDGPEIMGCTGCLIDWKKGKNVTLKTIKKKQKHKGRGTVRTVTKTVPNDSFFNFFTPPEVPENGELDDDAEAILTADFEIGHFLRERIIPRSVLYFTGEAIEDDDDDYDEEGEEADDEEGEEEADEDNDPDYEPKKGQNPAECKQQ.

Residues 1–37 (MANIDNKGQTELDQQDMEDVEDVEEEETGEDANSKAR) form a disordered region. Residues 13-30 (DQQDMEDVEDVEEEETGE) show a composition bias toward acidic residues. The short motif at 126-150 (YEPTEEECEWKVEEEDISGDLKEKA) is the NAP1L motif element. A Nuclear localization signal motif is present at residues 273 to 279 (IKKKQKH). Over residues 346 to 377 (AIEDDDDDYDEEGEEADDEEGEEEADEDNDPD) the composition is skewed to acidic residues. The segment at 346–392 (AIEDDDDDYDEEGEEADDEEGEEEADEDNDPDYEPKKGQNPAECKQQ) is disordered.

The protein belongs to the nucleosome assembly protein (NAP) family. Forms homomultimers. Interacts with histone B4. Interacts with the B-type cyclins ccnb1 and ccnb2. Phosphorylated by cyclin B-cdc2 kinase complexes. In terms of tissue distribution, initially expressed throughout the embryo with expression higher at the animal pole. Becomes localized to presumptive ectoderm by gastrula stages. By stage 18 (neurula), expressed in the neural plate and posterior to the cement gland. In late neurula/early tailbud stages, expressed in the neural crest, neural tube, eyes, tailbud and ventral blood islands. Adult expression is predominantly in ovaries.

It localises to the cytoplasm. It is found in the nucleus. In terms of biological role, acts as a chaperone for the linker histone to facilitate deposition of histone B4 onto linker DNA. Required for both remodeling of sperm chromatin into nucleosomes, and linker histone binding to nucleosome core dimers. Plays a role in tissue-specific gene regulation. Required for primitive hemopoiesis, acting upstream of tal1/scl. This is Nucleosome assembly protein 1-like 1-A (nap1l1-a) from Xenopus laevis (African clawed frog).